Consider the following 295-residue polypeptide: Protoheme IX farnesyltransferase (295 aa).

9 helical membrane-spanning segments follow: residues 24 to 44 (IMYL…GSMH), 45 to 65 (PFLA…AGAI), 94 to 114 (SALE…AIAV), 117 to 137 (ISAA…TIWL), 144 to 164 (NIVI…AAVT), 171 to 191 (SFIL…ALSL), 216 to 236 (KYIL…ALFL), 240 to 260 (LLYL…AVSV), and 272 to 292 (MFSY…FCSI).

This sequence belongs to the UbiA prenyltransferase family. Protoheme IX farnesyltransferase subfamily.

The protein localises to the cell membrane. It carries out the reaction heme b + (2E,6E)-farnesyl diphosphate + H2O = Fe(II)-heme o + diphosphate. Its pathway is porphyrin-containing compound metabolism; heme O biosynthesis; heme O from protoheme: step 1/1. Converts heme B (protoheme IX) to heme O by substitution of the vinyl group on carbon 2 of heme B porphyrin ring with a hydroxyethyl farnesyl side group. This Wolbachia pipientis wMel protein is Protoheme IX farnesyltransferase.